The primary structure comprises 260 residues: Flagellar basal-body rod protein FlgG (260 aa).

This sequence belongs to the flagella basal body rod proteins family. As to quaternary structure, the basal body constitutes a major portion of the flagellar organelle and consists of four rings (L,P,S, and M) mounted on a central rod. The rod consists of about 26 subunits of FlgG in the distal portion, and FlgB, FlgC and FlgF are thought to build up the proximal portion of the rod with about 6 subunits each.

The protein resides in the bacterial flagellum basal body. This chain is Flagellar basal-body rod protein FlgG (flgG), found in Buchnera aphidicola subsp. Schizaphis graminum (strain Sg).